Consider the following 267-residue polypeptide: Small ribosomal subunit protein uS2 (267 aa).

The interval 224 to 244 (GRQGEDEDVTEDSFKDNKDAK) is disordered. The segment covering 235-244 (DSFKDNKDAK) has biased composition (basic and acidic residues).

It belongs to the universal ribosomal protein uS2 family.

The sequence is that of Small ribosomal subunit protein uS2 from Lactiplantibacillus plantarum (strain ATCC BAA-793 / NCIMB 8826 / WCFS1) (Lactobacillus plantarum).